Here is a 635-residue protein sequence, read N- to C-terminus: ATP-dependent zinc metalloprotease FtsH (635 aa).

Residues 1–6 (MNNQGR) are Cytoplasmic-facing. The chain crosses the membrane as a helical span at residues 7 to 27 (SILTWAALFVFVILLFNVFQS). The Periplasmic segment spans residues 28–103 (DGLLGGRNNI…VVPLETRMNT (76 aa)). A helical transmembrane segment spans residues 104–124 (FLGFLISWFPMLLLIGVWVFF). The Cytoplasmic portion of the chain corresponds to 125–635 (MRQMHGGGKA…KKAKKESTNI (511 aa)). 195 to 202 (GPPGTGKT) contributes to the ATP binding site. His-417 contacts Zn(2+). Glu-418 is an active-site residue. Zn(2+) contacts are provided by His-421 and Asp-495. A disordered region spans residues 600-635 (SEEENKFPFNDSPTIKIDKEKSPEKAKKAKKESTNI). A compositionally biased stretch (basic and acidic residues) spans 615–635 (KIDKEKSPEKAKKAKKESTNI).

It in the central section; belongs to the AAA ATPase family. This sequence in the C-terminal section; belongs to the peptidase M41 family. As to quaternary structure, homohexamer. It depends on Zn(2+) as a cofactor.

It localises to the cell inner membrane. Functionally, acts as a processive, ATP-dependent zinc metallopeptidase for both cytoplasmic and membrane proteins. Plays a role in the quality control of integral membrane proteins. This chain is ATP-dependent zinc metalloprotease FtsH, found in Rickettsia felis (strain ATCC VR-1525 / URRWXCal2) (Rickettsia azadi).